Consider the following 999-residue polypeptide: Probable beta-galactosidase C (999 aa).

The N-terminal stretch at 1–21 is a signal peptide; sequence MFFFRFLTTVLLLFNAKLLVA. A glycan (N-linked (GlcNAc...) asparagine) is linked at asparagine 25. The substrate site is built by tyrosine 80, asparagine 125, glutamate 127, and asparagine 185. The active-site Proton donor is the glutamate 186. A glycan (N-linked (GlcNAc...) asparagine) is linked at asparagine 195. Residue tyrosine 249 participates in substrate binding. A disulfide bond links cysteine 255 and cysteine 302. The N-linked (GlcNAc...) asparagine glycan is linked to asparagine 274. The Nucleophile role is filled by glutamate 285. Tyrosine 351 serves as a coordination point for substrate. Residues asparagine 389, asparagine 441, asparagine 512, asparagine 519, asparagine 600, asparagine 675, asparagine 713, asparagine 757, asparagine 808, and asparagine 897 are each glycosylated (N-linked (GlcNAc...) asparagine).

This sequence belongs to the glycosyl hydrolase 35 family.

The protein localises to the secreted. The catalysed reaction is Hydrolysis of terminal non-reducing beta-D-galactose residues in beta-D-galactosides.. Its function is as follows. Cleaves beta-linked terminal galactosyl residues from gangliosides, glycoproteins, and glycosaminoglycans. This chain is Probable beta-galactosidase C (lacC), found in Talaromyces marneffei (strain ATCC 18224 / CBS 334.59 / QM 7333) (Penicillium marneffei).